The chain runs to 341 residues: Tetraacyldisaccharide 4'-kinase (341 aa).

54–61 (TVGGTGKT) serves as a coordination point for ATP.

This sequence belongs to the LpxK family.

It carries out the reaction a lipid A disaccharide + ATP = a lipid IVA + ADP + H(+). Its pathway is glycolipid biosynthesis; lipid IV(A) biosynthesis; lipid IV(A) from (3R)-3-hydroxytetradecanoyl-[acyl-carrier-protein] and UDP-N-acetyl-alpha-D-glucosamine: step 6/6. Functionally, transfers the gamma-phosphate of ATP to the 4'-position of a tetraacyldisaccharide 1-phosphate intermediate (termed DS-1-P) to form tetraacyldisaccharide 1,4'-bis-phosphate (lipid IVA). The polypeptide is Tetraacyldisaccharide 4'-kinase (Mesorhizobium japonicum (strain LMG 29417 / CECT 9101 / MAFF 303099) (Mesorhizobium loti (strain MAFF 303099))).